A 239-amino-acid polypeptide reads, in one-letter code: UDP-2,3-diacylglucosamine hydrolase (239 aa).

Positions 8, 10, 41, 78, and 113 each coordinate Mn(2+). Residue 78 to 79 (NR) participates in substrate binding. Substrate contacts are provided by aspartate 121, serine 159, asparagine 163, lysine 166, and histidine 194. The Mn(2+) site is built by histidine 194 and histidine 196.

The protein belongs to the LpxH family. Mn(2+) serves as cofactor.

Its subcellular location is the cell inner membrane. It carries out the reaction UDP-2-N,3-O-bis[(3R)-3-hydroxytetradecanoyl]-alpha-D-glucosamine + H2O = 2-N,3-O-bis[(3R)-3-hydroxytetradecanoyl]-alpha-D-glucosaminyl 1-phosphate + UMP + 2 H(+). The protein operates within glycolipid biosynthesis; lipid IV(A) biosynthesis; lipid IV(A) from (3R)-3-hydroxytetradecanoyl-[acyl-carrier-protein] and UDP-N-acetyl-alpha-D-glucosamine: step 4/6. Hydrolyzes the pyrophosphate bond of UDP-2,3-diacylglucosamine to yield 2,3-diacylglucosamine 1-phosphate (lipid X) and UMP by catalyzing the attack of water at the alpha-P atom. Involved in the biosynthesis of lipid A, a phosphorylated glycolipid that anchors the lipopolysaccharide to the outer membrane of the cell. The protein is UDP-2,3-diacylglucosamine hydrolase of Shewanella sp. (strain ANA-3).